The chain runs to 331 residues: UPF0194 membrane protein YbhG (331 aa).

The N-terminal stretch at 1–19 is a signal peptide; it reads MKKPVVIGLVIAAIVAVIA. Positions 140 to 209 form a coiled coil; sequence RTISANDLEN…DLQDTTLIAP (70 aa).

This sequence belongs to the UPF0194 family.

It is found in the periplasm. The polypeptide is UPF0194 membrane protein YbhG (ybhG) (Salmonella typhi).